Here is a 493-residue protein sequence, read N- to C-terminus: Cardiolipin synthase 1 (493 aa).

2 consecutive transmembrane segments (helical) span residues 13 to 33 and 45 to 65; these read FTII…IIIF and WAWL…YLFF. PLD phosphodiesterase domains lie at 228 to 255 and 406 to 433; these read MNNR…GDEY and ENGF…DFRS. Residues His-233, Lys-235, Asp-240, His-411, Lys-413, and Asp-418 contribute to the active site.

It belongs to the phospholipase D family. Cardiolipin synthase subfamily.

The protein resides in the cell membrane. The enzyme catalyses 2 a 1,2-diacyl-sn-glycero-3-phospho-(1'-sn-glycerol) = a cardiolipin + glycerol. In terms of biological role, catalyzes the reversible phosphatidyl group transfer from one phosphatidylglycerol molecule to another to form cardiolipin (CL) (diphosphatidylglycerol) and glycerol. The chain is Cardiolipin synthase 1 (cls1) from Staphylococcus aureus (strain MRSA252).